A 578-amino-acid chain; its full sequence is Vitelline membrane-like protein (578 aa).

The N-terminal stretch at Met-1–Ser-21 is a signal peptide. Residues Gln-72–Ser-452 form a 45 X 8 AA approximate tandem repeats of [PS]-[AS]-Y-S-A-P-A-[AS] region. Disordered regions lie at residues Ala-133–Pro-442 and Ser-487–Ser-514. In terms of domain architecture, VM spans Ser-549–Tyr-578.

Interacts with Vm26Aa and Vm26Ab; forms part of a disulfide-linked network within the vitelline membrane of stage 10 egg chambers. Becomes part of a disulfide-linked network including other vitelline membrane proteins, including Vm26Aa and Vm26Ab, during vitelline membrane biogenesis and maturation. In terms of processing, sulfated by pip; probably involved in embryo dorsal-ventral axis determination. Sulfation by pip may occur on covalently bound glycosaminoglycans. Secreted into the perivitelline space and becomes stably incorporated into the vitelline membrane (at protein level). Expressed throughout the follicle cell layer of stage 10 egg chambers.

The protein resides in the secreted. The protein localises to the extracellular space. Its subcellular location is the extracellular matrix. Major early eggshell protein secreted by folicle cells into the perivitelline space and incorporated into the vitelline membrane. Localized sulfation by pip may be involved in embryo dorsal-ventral axis determination. The polypeptide is Vitelline membrane-like protein (Drosophila melanogaster (Fruit fly)).